The sequence spans 206 residues: Large ribosomal subunit protein uL22m (206 aa).

Residues 1–40 (MAAALLRELGALRVPNLRIWATQTLRVLPPSCIHTSASLD) constitute a mitochondrion transit peptide.

Belongs to the universal ribosomal protein uL22 family. In terms of assembly, component of the mitochondrial ribosome large subunit (39S) which comprises a 16S rRNA and about 50 distinct proteins.

It is found in the mitochondrion. The protein is Large ribosomal subunit protein uL22m (Mrpl22) of Mus musculus (Mouse).